We begin with the raw amino-acid sequence, 340 residues long: uncharacterized protein (340 aa).

The region spanning 58–307 (AALPFRYTVN…PSYREMLRER (250 aa)) is the Radical SAM core domain. Cys72, Cys76, and Cys79 together coordinate [4Fe-4S] cluster. A run of 2 helical transmembrane segments spans residues 140 to 160 (YALMPGIIGALAASGTPLSIL) and 243 to 263 (QLLGQIAAAGATGVTVFGLHL).

The cofactor is [4Fe-4S] cluster.

It localises to the cell membrane. This is an uncharacterized protein from Mycobacterium tuberculosis (strain CDC 1551 / Oshkosh).